The following is a 195-amino-acid chain: MKKRALIVLAALVLASCTSRKPASPPAPIEPVPPPVTVSVQPPPPATSEPVPMPPKIKTIDWQASLSPLVQQMLAVEGINDGSVLLVNTMKNTTNGSVQTGKATAALTRLITDAGGKFQVVGANQLNAARQMLGLSADDSLESRSKAVGLARYLNAQYVLYSAAAGDVKQPTLDLQLMLVQTGEIIWSGNGVAQD.

An N-terminal signal peptide occupies residues 1–16; sequence MKKRALIVLAALVLAS. A lipid anchor (N-palmitoyl cysteine) is attached at Cys17. Cys17 carries the S-diacylglycerol cysteine lipid modification. Residues 19 to 51 are disordered; sequence SRKPASPPAPIEPVPPPVTVSVQPPPPATSEPV. Residues 23–51 show a composition bias toward pro residues; sequence ASPPAPIEPVPPPVTVSVQPPPPATSEPV.

The protein belongs to the LpoB family. As to quaternary structure, interacts with PBP1b.

It is found in the cell outer membrane. Its function is as follows. Regulator of peptidoglycan synthesis that is essential for the function of penicillin-binding protein 1B (PBP1b). This is Penicillin-binding protein activator LpoB from Sodalis glossinidius (strain morsitans).